A 428-amino-acid polypeptide reads, in one-letter code: Cytochrome c biogenesis protein CcsB (428 aa).

The next 3 membrane-spanning stretches (helical) occupy residues 14-34 (LRFA…GTFI), 72-92 (SNWF…CSFR), and 162-182 (LGPI…AYGN).

The protein belongs to the Ccs1/CcsB family. As to quaternary structure, may interact with CcsA.

The protein localises to the cellular thylakoid membrane. In terms of biological role, required during biogenesis of c-type cytochromes (cytochrome c6 and cytochrome f) at the step of heme attachment. The sequence is that of Cytochrome c biogenesis protein CcsB from Prochlorococcus marinus subsp. pastoris (strain CCMP1986 / NIES-2087 / MED4).